Reading from the N-terminus, the 432-residue chain is D-amino acid dehydrogenase (432 aa).

3-17 (VVILGSGVVGVASAW) contributes to the FAD binding site.

Belongs to the DadA oxidoreductase family. FAD serves as cofactor.

The catalysed reaction is a D-alpha-amino acid + A + H2O = a 2-oxocarboxylate + AH2 + NH4(+). It participates in amino-acid degradation; D-alanine degradation; NH(3) and pyruvate from D-alanine: step 1/1. Functionally, oxidative deamination of D-amino acids. In Shigella dysenteriae serotype 1 (strain Sd197), this protein is D-amino acid dehydrogenase.